The primary structure comprises 98 residues: NADH-ubiquinone oxidoreductase chain 4L (98 aa).

Helical transmembrane passes span 2 to 22 (SPAVLNITMAFTFSLLGTLMF), 26 to 46 (LMSTLLCLEGMMLSLFMLATI), and 59 to 79 (IPIAILVFAACEAAVGLALLA).

This sequence belongs to the complex I subunit 4L family. In terms of assembly, core subunit of respiratory chain NADH dehydrogenase (Complex I) which is composed of 45 different subunits.

It is found in the mitochondrion inner membrane. It carries out the reaction a ubiquinone + NADH + 5 H(+)(in) = a ubiquinol + NAD(+) + 4 H(+)(out). Its function is as follows. Core subunit of the mitochondrial membrane respiratory chain NADH dehydrogenase (Complex I) which catalyzes electron transfer from NADH through the respiratory chain, using ubiquinone as an electron acceptor. Part of the enzyme membrane arm which is embedded in the lipid bilayer and involved in proton translocation. This chain is NADH-ubiquinone oxidoreductase chain 4L (MT-ND4L), found in Alexandromys kikuchii (Taiwan vole).